Here is a 577-residue protein sequence, read N- to C-terminus: Arginine--tRNA ligase (577 aa).

Residues 122-132 carry the 'HIGH' region motif; that stretch reads PNVAKEMHVGH.

It belongs to the class-I aminoacyl-tRNA synthetase family. In terms of assembly, monomer.

It localises to the cytoplasm. It carries out the reaction tRNA(Arg) + L-arginine + ATP = L-arginyl-tRNA(Arg) + AMP + diphosphate. The polypeptide is Arginine--tRNA ligase (Escherichia fergusonii (strain ATCC 35469 / DSM 13698 / CCUG 18766 / IAM 14443 / JCM 21226 / LMG 7866 / NBRC 102419 / NCTC 12128 / CDC 0568-73)).